Here is a 617-residue protein sequence, read N- to C-terminus: Chaperone protein HscA homolog (617 aa).

This sequence belongs to the heat shock protein 70 family.

Functionally, chaperone involved in the maturation of iron-sulfur cluster-containing proteins. Has a low intrinsic ATPase activity which is markedly stimulated by HscB. The chain is Chaperone protein HscA homolog from Vibrio campbellii (strain ATCC BAA-1116).